The following is a 452-amino-acid chain: Cobyrinate a,c-diamide synthase (452 aa).

Residues 246-439 form the GATase cobBQ-type domain; that stretch reads TLAYALDDAF…LHVHFYQDEQ (194 aa). Cysteine 328 functions as the Nucleophile in the catalytic mechanism.

Belongs to the CobB/CbiA family. Mg(2+) is required as a cofactor.

It carries out the reaction cob(II)yrinate + 2 L-glutamine + 2 ATP + 2 H2O = cob(II)yrinate a,c diamide + 2 L-glutamate + 2 ADP + 2 phosphate + 2 H(+). The protein operates within cofactor biosynthesis; adenosylcobalamin biosynthesis; cob(II)yrinate a,c-diamide from sirohydrochlorin (anaerobic route): step 10/10. Functionally, catalyzes the ATP-dependent amidation of the two carboxylate groups at positions a and c of cobyrinate, using either L-glutamine or ammonia as the nitrogen source. The chain is Cobyrinate a,c-diamide synthase from Streptococcus sanguinis (strain SK36).